Here is a 473-residue protein sequence, read N- to C-terminus: Glutamate--tRNA ligase (473 aa).

The short motif at 11 to 21 (PSPTGFLHIGG) is the 'HIGH' region element. The 'KMSKS' region motif lies at 240–244 (KLSKR). ATP is bound at residue K243.

It belongs to the class-I aminoacyl-tRNA synthetase family. Glutamate--tRNA ligase type 1 subfamily. In terms of assembly, monomer.

It localises to the cytoplasm. It catalyses the reaction tRNA(Glu) + L-glutamate + ATP = L-glutamyl-tRNA(Glu) + AMP + diphosphate. Catalyzes the attachment of glutamate to tRNA(Glu) in a two-step reaction: glutamate is first activated by ATP to form Glu-AMP and then transferred to the acceptor end of tRNA(Glu). The chain is Glutamate--tRNA ligase from Afipia carboxidovorans (strain ATCC 49405 / DSM 1227 / KCTC 32145 / OM5) (Oligotropha carboxidovorans).